The primary structure comprises 246 residues: ATP synthase subunit a (246 aa).

Residues 1–3 constitute a propeptide, removed in mature form; sequence MIY. A run of 7 helical transmembrane segments spans residues 25–45, 51–71, 79–99, 112–132, 138–158, 178–198, and 203–223; these read VNNY…SVFL, LGFN…LNMV, GGMY…ANLV, LVAI…MGLS, FFAL…LVLI, VLSG…LMGS, and FMGG…EFAI.

This sequence belongs to the ATPase A chain family. As to quaternary structure, F-type ATPases have 2 components, CF(1) - the catalytic core - and CF(0) - the membrane proton channel. CF(1) has five subunits: alpha(3), beta(3), gamma(1), delta(1), epsilon(1). CF(0) has three main subunits: a, b and c.

Its subcellular location is the mitochondrion inner membrane. Functionally, mitochondrial membrane ATP synthase (F(1)F(0) ATP synthase or Complex V) produces ATP from ADP in the presence of a proton gradient across the membrane which is generated by electron transport complexes of the respiratory chain. F-type ATPases consist of two structural domains, F(1) - containing the extramembraneous catalytic core and F(0) - containing the membrane proton channel, linked together by a central stalk and a peripheral stalk. During catalysis, ATP synthesis in the catalytic domain of F(1) is coupled via a rotary mechanism of the central stalk subunits to proton translocation. Key component of the proton channel; it may play a direct role in the translocation of protons across the membrane. This Debaryomyces hansenii (strain ATCC 36239 / CBS 767 / BCRC 21394 / JCM 1990 / NBRC 0083 / IGC 2968) (Yeast) protein is ATP synthase subunit a (ATP6).